The sequence spans 392 residues: Ceramide phosphoethanolamine synthase (392 aa).

At 1–10 (MIGPSSQISK) the chain is on the lumenal side. Residues 11-31 (ILLTLLFLLIIFYVFMDVELY) traverse the membrane as a helical segment. Over 32–140 (LRIHNYAIER…MFDNVIGFSR (109 aa)) the chain is Cytoplasmic. A compositionally biased stretch (low complexity) spans 59–82 (SESGSGSIGGSSSSSSSSSSSTST). A disordered region spans residues 59 to 91 (SESGSGSIGGSSSSSSSSSSSTSTKLPTAGDRQ). The chain crosses the membrane as a helical span at residues 141 to 161 (STFITPNMISFFHVGVACLAG). At 162–212 (KLVASDSLGYRRLGVLLFQIRTFLDDLDGHVARVRKHIRGERSEIGTSGYY) the chain is on the lumenal side. The chain crosses the membrane as a helical span at residues 213-233 (VDGLCDGLGCIALLLGIFFYL). Over 234–271 (KNNPPRRGYSIIPMSDSKLPEPTMMIPKMKATTRKVAK) the chain is Cytoplasmic. A helical membrane pass occupies residues 272-288 (NVISFTGQLLLSSTAWN). Over 289 to 319 (RYIAVYQNMLEREDVSGNQSHCQDYVFKSTW) the chain is Lumenal. Residues 320 to 340 (FFCVAWMWRIVNVHALLHCVL) traverse the membrane as a helical segment. The Cytoplasmic portion of the chain corresponds to 341–356 (LSIFCDKLWDFLRAIR). The chain crosses the membrane as a helical span at residues 357 to 377 (YSGYIILLVAICLTEMHILEA). The Lumenal portion of the chain corresponds to 378 to 392 (QNYIFNSTACSNISL).

This sequence belongs to the CDP-alcohol phosphatidyltransferase class-I family. Requires Mn(2+) as cofactor.

It is found in the membrane. Its subcellular location is the golgi apparatus membrane. The protein localises to the cell membrane. The catalysed reaction is CDP-ethanolamine + an N-acylsphing-4-enine = an N-acylsphing-4-enine 1-phosphoethanolamine + CMP + H(+). The enzyme catalyses CDP-ethanolamine + an N-acyl-sphingoid base = an N-acyl-sphingoid 1-phosphoethanolamine + CMP + H(+). Catalyzes the biosynthesis of ceramide phosphoethanolamine (CPE) through the transfer of a phosphatidyl head group from cytidine 5'-diphosphate (CDP)-ethanolamine on to the primary hydroxyl of ceramide. In Drosophila melanogaster (Fruit fly), this protein is Ceramide phosphoethanolamine synthase.